Consider the following 273-residue polypeptide: DNA repair protein RecO (273 aa).

The segment at 250–273 (NVGQNPSGKDDLNERRDVDGTGES) is disordered. Positions 257 to 273 (GKDDLNERRDVDGTGES) are enriched in basic and acidic residues.

Belongs to the RecO family.

Involved in DNA repair and RecF pathway recombination. This chain is DNA repair protein RecO, found in Desulfitobacterium hafniense (strain DSM 10664 / DCB-2).